A 1578-amino-acid chain; its full sequence is Bromodomain-containing protein DDB_G0270170 (1578 aa).

Positions Met1–Glu12 are enriched in acidic residues. Disordered stretches follow at residues Met1–Glu39, Asn108–Glu127, His151–Leu285, and Asn319–Thr454. A compositionally biased stretch (low complexity) spans Ser18 to Asn35. A compositionally biased stretch (basic and acidic residues) spans Tyr152 to Asp163. 2 stretches are compositionally biased toward low complexity: residues Asn164–Ile185 and Thr197–Asn231. Polar residues-rich tracts occupy residues Asn319–Lys332 and Thr340–Ala351. Positions Gln352 to Thr383 are enriched in low complexity. Over residues Glu384–Ile395 the composition is skewed to polar residues. Composition is skewed to low complexity over residues Lys396–Lys407 and Val417–Thr433. Positions Ser443–Thr454 are enriched in polar residues. Residues Ser479 to Lys506 are a coiled coil. Disordered stretches follow at residues Phe543–Asp565 and Ile580–Lys730. Low complexity-rich tracts occupy residues Asn604–Gln653 and Thr660–Thr686. Residues Val735–Val841 enclose the Bromo domain. Residues Lys851–Asn903 are a coiled coil. 4 disordered regions span residues Lys874–Thr969, His1039–Asn1167, Ser1184–Ala1452, and Glu1480–Met1544. 3 stretches are compositionally biased toward low complexity: residues Asn881–Ser911, Ser918–Asn961, and Ser1047–Ser1061. An NET domain is found at Ser957–His1039. Residues Arg1064–Gly1077 show a composition bias toward basic and acidic residues. Basic residues predominate over residues His1092–Lys1107. The segment covering Ser1112–Asn1167 has biased composition (low complexity). Residues Ser1113 to Asn1150 adopt a coiled-coil conformation. A compositionally biased stretch (acidic residues) spans Thr1192–Ser1204. Composition is skewed to low complexity over residues Glu1205–Ser1218 and Tyr1231–Asn1334. Residues Asn1280 to Asn1308 adopt a coiled-coil conformation. Residues Ser1356–Glu1369 show a composition bias toward polar residues. Positions Ser1370–Thr1386 are enriched in low complexity. Residues Leu1387–Ala1399 show a composition bias toward polar residues. 2 stretches are compositionally biased toward low complexity: residues Ser1400 to Ser1424 and Asn1432 to Ser1451. The stretch at Thr1462–Met1544 forms a coiled coil. Basic and acidic residues predominate over residues Glu1480–Asn1538.

The sequence is that of Bromodomain-containing protein DDB_G0270170 from Dictyostelium discoideum (Social amoeba).